A 423-amino-acid polypeptide reads, in one-letter code: Serine--tRNA ligase (423 aa).

An L-serine-binding site is contributed by 231-233 (TAE). 262–264 (RSE) contacts ATP. Glu-285 contacts L-serine. 349–352 (EISS) serves as a coordination point for ATP. Ser-384 is a binding site for L-serine.

The protein belongs to the class-II aminoacyl-tRNA synthetase family. Type-1 seryl-tRNA synthetase subfamily. As to quaternary structure, homodimer. The tRNA molecule binds across the dimer.

Its subcellular location is the cytoplasm. It catalyses the reaction tRNA(Ser) + L-serine + ATP = L-seryl-tRNA(Ser) + AMP + diphosphate + H(+). The catalysed reaction is tRNA(Sec) + L-serine + ATP = L-seryl-tRNA(Sec) + AMP + diphosphate + H(+). Its pathway is aminoacyl-tRNA biosynthesis; selenocysteinyl-tRNA(Sec) biosynthesis; L-seryl-tRNA(Sec) from L-serine and tRNA(Sec): step 1/1. Catalyzes the attachment of serine to tRNA(Ser). Is also able to aminoacylate tRNA(Sec) with serine, to form the misacylated tRNA L-seryl-tRNA(Sec), which will be further converted into selenocysteinyl-tRNA(Sec). The sequence is that of Serine--tRNA ligase from Lactococcus lactis subsp. cremoris (strain SK11).